A 201-amino-acid polypeptide reads, in one-letter code: Large ribosomal subunit protein uL4 (201 aa).

Residues 45-71 (AQKTRAEVTGSGKKPWRQKGTGRARAG) are disordered.

The protein belongs to the universal ribosomal protein uL4 family. In terms of assembly, part of the 50S ribosomal subunit.

Functionally, one of the primary rRNA binding proteins, this protein initially binds near the 5'-end of the 23S rRNA. It is important during the early stages of 50S assembly. It makes multiple contacts with different domains of the 23S rRNA in the assembled 50S subunit and ribosome. Forms part of the polypeptide exit tunnel. The protein is Large ribosomal subunit protein uL4 of Shewanella oneidensis (strain ATCC 700550 / JCM 31522 / CIP 106686 / LMG 19005 / NCIMB 14063 / MR-1).